We begin with the raw amino-acid sequence, 336 residues long: MKDRYILAVESSCDETSVAILKNDKELLANIIASQVESHKRFGGVVPEVASRHHVEVVTTCFEDALQEAGIVASDLDAVAVTYGPGLVGALLVGMAAAKAFAWANKLPLIPVNHMAGHLMAARDVKELQYPLLALLVSGGHTELVYVSGPGDYKIVGETRDDAVGEAYDKVGRVMGLTYPAGREIDQLAHKGQDTYHFPRAMIKEDHLEFSFSGLKSAFINLHHNAEQKGEALVLEDLCASFQAAVLDILLAKTQKALLKYPVKTLVVAGGVAANQGLRERLATDISPDIDVVIPPLRLCGDNAGMIALAAAIEFEKENFASLKLNAKPSLAFEGL.

Residues His-114 and His-118 each coordinate Fe cation. Residues 136–140, Asp-169, Gly-182, Asp-186, and Asn-275 each bind substrate; that span reads LVSGG. Asp-302 contributes to the Fe cation binding site.

This sequence belongs to the KAE1 / TsaD family. The cofactor is Fe(2+).

The protein resides in the cytoplasm. It catalyses the reaction L-threonylcarbamoyladenylate + adenosine(37) in tRNA = N(6)-L-threonylcarbamoyladenosine(37) in tRNA + AMP + H(+). Functionally, required for the formation of a threonylcarbamoyl group on adenosine at position 37 (t(6)A37) in tRNAs that read codons beginning with adenine. Is involved in the transfer of the threonylcarbamoyl moiety of threonylcarbamoyl-AMP (TC-AMP) to the N6 group of A37, together with TsaE and TsaB. TsaD likely plays a direct catalytic role in this reaction. The polypeptide is tRNA N6-adenosine threonylcarbamoyltransferase (Streptococcus agalactiae serotype III (strain NEM316)).